A 496-amino-acid chain; its full sequence is Iroquois-class homeodomain protein irx-4 (496 aa).

The segment at residues 141-203 (GSTRRKNATR…NARRRLKKEN (63 aa)) is a DNA-binding region (homeobox; TALE-type). The tract at residues 203–236 (NKMTWPPRNKCSDEKRPYDEEEEEEEEEDSQKAT) is disordered. Positions 221–231 (DEEEEEEEEED) are enriched in acidic residues.

This sequence belongs to the TALE/IRO homeobox family. Expressed in the neural plate in overlapping patterns with other irx members, which all share an anterior border of expression. Broadly expressed in the tailbud rhombencephalon (hindbrain). Outside the nervous system and at tailbud stages, expressed in the developing otic vesicle, branchial arches and prospective heart region.

It is found in the nucleus. Its function is as follows. Acts partially redundantly with other irx members in neural patterning. Required for formation of the posterior forebrain, midbrain, hindbrain, and to a lesser extent, spinal cord. Patterns the neuroectoderm in both the anterior/posterior and dorsal/ventral axes. Does not appear to play a role in pronephros kidney development. This is Iroquois-class homeodomain protein irx-4 from Xenopus tropicalis (Western clawed frog).